The following is a 509-amino-acid chain: 2,3-bisphosphoglycerate-independent phosphoglycerate mutase (509 aa).

Mn(2+) is bound by residues aspartate 12 and serine 62. Catalysis depends on serine 62, which acts as the Phosphoserine intermediate. Residues histidine 123, 153 to 154 (RD), arginine 185, arginine 191, 260 to 263 (RPDR), and lysine 333 each bind substrate. Mn(2+) is bound by residues aspartate 400, histidine 404, aspartate 441, histidine 442, and histidine 460.

It belongs to the BPG-independent phosphoglycerate mutase family. In terms of assembly, monomer. It depends on Mn(2+) as a cofactor.

The catalysed reaction is (2R)-2-phosphoglycerate = (2R)-3-phosphoglycerate. Its pathway is carbohydrate degradation; glycolysis; pyruvate from D-glyceraldehyde 3-phosphate: step 3/5. Its function is as follows. Catalyzes the interconversion of 2-phosphoglycerate and 3-phosphoglycerate. In Clostridium botulinum (strain Langeland / NCTC 10281 / Type F), this protein is 2,3-bisphosphoglycerate-independent phosphoglycerate mutase.